The chain runs to 260 residues: Glutamate racemase (260 aa).

Substrate contacts are provided by residues 7-8 (DS) and 39-40 (YG). The active-site Proton donor/acceptor is the C71. Position 72–73 (72–73 (NT)) interacts with substrate. The active-site Proton donor/acceptor is the C182. 183–184 (TH) contacts substrate.

Belongs to the aspartate/glutamate racemases family.

The catalysed reaction is L-glutamate = D-glutamate. It functions in the pathway cell wall biogenesis; peptidoglycan biosynthesis. Provides the (R)-glutamate required for cell wall biosynthesis. In Sulfurihydrogenibium sp. (strain YO3AOP1), this protein is Glutamate racemase.